We begin with the raw amino-acid sequence, 101 residues long: NADH-quinone oxidoreductase subunit K (101 aa).

The next 3 helical transmembrane spans lie at Thr-2 to Leu-22, Val-28 to Phe-48, and Phe-62 to Ile-82.

The protein belongs to the complex I subunit 4L family. In terms of assembly, NDH-1 is composed of 14 different subunits. Subunits NuoA, H, J, K, L, M, N constitute the membrane sector of the complex.

The protein resides in the cell membrane. It carries out the reaction a quinone + NADH + 5 H(+)(in) = a quinol + NAD(+) + 4 H(+)(out). In terms of biological role, NDH-1 shuttles electrons from NADH, via FMN and iron-sulfur (Fe-S) centers, to quinones in the respiratory chain. The immediate electron acceptor for the enzyme in this species is believed to be a menaquinone. Couples the redox reaction to proton translocation (for every two electrons transferred, four hydrogen ions are translocated across the cytoplasmic membrane), and thus conserves the redox energy in a proton gradient. This Geobacillus kaustophilus (strain HTA426) protein is NADH-quinone oxidoreductase subunit K.